Consider the following 81-residue polypeptide: RNA-binding protein Hfq (81 aa).

Residues 11–71 (DIFLNNARKN…ISTITPTKPI (61 aa)) form the Sm domain.

Belongs to the Hfq family. In terms of assembly, homohexamer.

In terms of biological role, RNA chaperone that binds small regulatory RNA (sRNAs) and mRNAs to facilitate mRNA translational regulation in response to envelope stress, environmental stress and changes in metabolite concentrations. Also binds with high specificity to tRNAs. The sequence is that of RNA-binding protein Hfq from Clostridium beijerinckii (strain ATCC 51743 / NCIMB 8052) (Clostridium acetobutylicum).